The sequence spans 435 residues: Methylenetetrahydrofolate--tRNA-(uracil-5-)-methyltransferase TrmFO (435 aa).

10–15 is an FAD binding site; that stretch reads GAGLAG.

This sequence belongs to the MnmG family. TrmFO subfamily. FAD serves as cofactor.

The protein resides in the cytoplasm. It carries out the reaction uridine(54) in tRNA + (6R)-5,10-methylene-5,6,7,8-tetrahydrofolate + NADH + H(+) = 5-methyluridine(54) in tRNA + (6S)-5,6,7,8-tetrahydrofolate + NAD(+). The catalysed reaction is uridine(54) in tRNA + (6R)-5,10-methylene-5,6,7,8-tetrahydrofolate + NADPH + H(+) = 5-methyluridine(54) in tRNA + (6S)-5,6,7,8-tetrahydrofolate + NADP(+). Its function is as follows. Catalyzes the folate-dependent formation of 5-methyl-uridine at position 54 (M-5-U54) in all tRNAs. The sequence is that of Methylenetetrahydrofolate--tRNA-(uracil-5-)-methyltransferase TrmFO from Geotalea uraniireducens (strain Rf4) (Geobacter uraniireducens).